The following is a 116-amino-acid chain: NADH-ubiquinone oxidoreductase chain 3 (116 aa).

Transmembrane regions (helical) follow at residues 3 to 23 (LLMTIITITALLSTILAIVSF), 56 to 76 (FFLIAILFLLFDLEIALLLPL), and 85 to 105 (PLLTFTWATAVLFLLTLGLIY).

The protein belongs to the complex I subunit 3 family.

The protein resides in the mitochondrion membrane. It catalyses the reaction a ubiquinone + NADH + 5 H(+)(in) = a ubiquinol + NAD(+) + 4 H(+)(out). Core subunit of the mitochondrial membrane respiratory chain NADH dehydrogenase (Complex I) that is believed to belong to the minimal assembly required for catalysis. Complex I functions in the transfer of electrons from NADH to the respiratory chain. The immediate electron acceptor for the enzyme is believed to be ubiquinone. The polypeptide is NADH-ubiquinone oxidoreductase chain 3 (MT-ND3) (Paralichthys olivaceus (Bastard halibut)).